Here is a 63-residue protein sequence, read N- to C-terminus: Large ribosomal subunit protein bL28c (63 aa).

Belongs to the bacterial ribosomal protein bL28 family.

Its subcellular location is the plastid. The protein localises to the chloroplast. The sequence is that of Large ribosomal subunit protein bL28c from Pyropia yezoensis (Susabi-nori).